The following is a 235-amino-acid chain: Octanoyltransferase (235 aa).

Positions 52–229 (KNRQASMIFC…SICSALEYIN (178 aa)) constitute a BPL/LPL catalytic domain. Residues 89–96 (RGGKITWH), 159–161 (AIG), and 172–174 (GFA) each bind substrate. Cys-190 (acyl-thioester intermediate) is an active-site residue.

The protein belongs to the LipB family.

It localises to the cytoplasm. It carries out the reaction octanoyl-[ACP] + L-lysyl-[protein] = N(6)-octanoyl-L-lysyl-[protein] + holo-[ACP] + H(+). The protein operates within protein modification; protein lipoylation via endogenous pathway; protein N(6)-(lipoyl)lysine from octanoyl-[acyl-carrier-protein]: step 1/2. Catalyzes the transfer of endogenously produced octanoic acid from octanoyl-acyl-carrier-protein onto the lipoyl domains of lipoate-dependent enzymes. Lipoyl-ACP can also act as a substrate although octanoyl-ACP is likely to be the physiological substrate. This chain is Octanoyltransferase, found in Tropheryma whipplei (strain Twist) (Whipple's bacillus).